Here is a 276-residue protein sequence, read N- to C-terminus: tRNA dimethylallyltransferase (276 aa).

The tract at residues 9–12 (DSLS) is interaction with substrate tRNA.

Belongs to the IPP transferase family. Monomer. Requires Mg(2+) as cofactor.

It carries out the reaction adenosine(37) in tRNA + dimethylallyl diphosphate = N(6)-dimethylallyladenosine(37) in tRNA + diphosphate. Functionally, catalyzes the transfer of a dimethylallyl group onto the adenine at position 37 in tRNAs that read codons beginning with uridine, leading to the formation of N6-(dimethylallyl)adenosine (i(6)A). The sequence is that of tRNA dimethylallyltransferase (miaA) from Helicobacter pylori (strain Shi470).